A 575-amino-acid polypeptide reads, in one-letter code: Septation ring formation regulator EzrA (575 aa).

The Extracellular portion of the chain corresponds to 1–8 (MSNGQLIY). A helical transmembrane segment spans residues 9-27 (LMVAIAVILVLAYVVAIFL). Topologically, residues 28–575 (RKRNEGRLEA…YEKTRETIRF (548 aa)) are cytoplasmic. Coiled-coil stretches lie at residues 110 to 191 (QIDQ…FVTL), 265 to 301 (LYEA…LYDI), 354 to 416 (VRRI…IEKD), and 456 to 526 (TASN…IQEA).

This sequence belongs to the EzrA family.

The protein localises to the cell membrane. In terms of biological role, negative regulator of FtsZ ring formation; modulates the frequency and position of FtsZ ring formation. Inhibits FtsZ ring formation at polar sites. Interacts either with FtsZ or with one of its binding partners to promote depolymerization. The sequence is that of Septation ring formation regulator EzrA from Streptococcus pneumoniae (strain JJA).